We begin with the raw amino-acid sequence, 94 residues long: MRELYLVIAYDTPDDRRRARLAKLLKGFGERRQYSVFEARLTREQWAHLKGKLEALVNKEEDVLAVYFLPPEAVGRTWRIGHEGLKRLEDPDFV.

Position 11 (D11) interacts with Mg(2+).

This sequence belongs to the CRISPR-associated endoribonuclease Cas2 protein family. In terms of assembly, homodimer, forms a heterotetramer with a Cas1 homodimer. It depends on Mg(2+) as a cofactor.

In terms of biological role, CRISPR (clustered regularly interspaced short palindromic repeat), is an adaptive immune system that provides protection against mobile genetic elements (viruses, transposable elements and conjugative plasmids). CRISPR clusters contain sequences complementary to antecedent mobile elements and target invading nucleic acids. CRISPR clusters are transcribed and processed into CRISPR RNA (crRNA). Functions as a ssRNA-specific endoribonuclease. Involved in the integration of spacer DNA into the CRISPR cassette. The polypeptide is CRISPR-associated endoribonuclease Cas2 (Thermus thermophilus (strain ATCC 27634 / DSM 579 / HB8)).